Consider the following 341-residue polypeptide: tRNA N6-adenosine threonylcarbamoyltransferase (341 aa).

Residues H111 and H115 each coordinate Fe cation. Residues 134-138 (LVSGG), D167, G180, and N270 contribute to the substrate site. D298 contributes to the Fe cation binding site.

Belongs to the KAE1 / TsaD family. Fe(2+) is required as a cofactor.

It localises to the cytoplasm. The enzyme catalyses L-threonylcarbamoyladenylate + adenosine(37) in tRNA = N(6)-L-threonylcarbamoyladenosine(37) in tRNA + AMP + H(+). Its function is as follows. Required for the formation of a threonylcarbamoyl group on adenosine at position 37 (t(6)A37) in tRNAs that read codons beginning with adenine. Is involved in the transfer of the threonylcarbamoyl moiety of threonylcarbamoyl-AMP (TC-AMP) to the N6 group of A37, together with TsaE and TsaB. TsaD likely plays a direct catalytic role in this reaction. In Thiobacillus denitrificans (strain ATCC 25259 / T1), this protein is tRNA N6-adenosine threonylcarbamoyltransferase.